The sequence spans 366 residues: tRNA/tmRNA (uracil-C(5))-methyltransferase (366 aa).

Gln-190, Tyr-218, Asn-223, Glu-239, and Asp-299 together coordinate S-adenosyl-L-methionine. The Nucleophile role is filled by Cys-324. Residue Glu-358 is the Proton acceptor of the active site.

The protein belongs to the class I-like SAM-binding methyltransferase superfamily. RNA M5U methyltransferase family. TrmA subfamily.

The enzyme catalyses uridine(54) in tRNA + S-adenosyl-L-methionine = 5-methyluridine(54) in tRNA + S-adenosyl-L-homocysteine + H(+). It carries out the reaction uridine(341) in tmRNA + S-adenosyl-L-methionine = 5-methyluridine(341) in tmRNA + S-adenosyl-L-homocysteine + H(+). Functionally, dual-specificity methyltransferase that catalyzes the formation of 5-methyluridine at position 54 (m5U54) in all tRNAs, and that of position 341 (m5U341) in tmRNA (transfer-mRNA). The sequence is that of tRNA/tmRNA (uracil-C(5))-methyltransferase from Edwardsiella ictaluri (strain 93-146).